A 117-amino-acid chain; its full sequence is Large ribosomal subunit protein uL18 (117 aa).

This sequence belongs to the universal ribosomal protein uL18 family. Part of the 50S ribosomal subunit; part of the 5S rRNA/L5/L18/L25 subcomplex. Contacts the 5S and 23S rRNAs.

Its function is as follows. This is one of the proteins that bind and probably mediate the attachment of the 5S RNA into the large ribosomal subunit, where it forms part of the central protuberance. The protein is Large ribosomal subunit protein uL18 of Actinobacillus succinogenes (strain ATCC 55618 / DSM 22257 / CCUG 43843 / 130Z).